Reading from the N-terminus, the 217-residue chain is uncharacterized protein (217 aa).

A run of 4 helical transmembrane segments spans residues 9–29, 54–74, 103–125, and 135–157; these read ISLASSVVATTVLVAPVLSTI, FLSTIIGAGYPIYKTYLLLEL, LMAYWCVYGCVTAAESILGRFLS, and IVFWLWLLNPRTQGAAFIYASYI.

The protein belongs to the DP1 family.

The protein localises to the endoplasmic reticulum membrane. This is an uncharacterized protein from Schizosaccharomyces pombe (strain 972 / ATCC 24843) (Fission yeast).